The primary structure comprises 438 residues: Thymidine phosphorylase (438 aa).

It belongs to the thymidine/pyrimidine-nucleoside phosphorylase family. In terms of assembly, homodimer.

It catalyses the reaction thymidine + phosphate = 2-deoxy-alpha-D-ribose 1-phosphate + thymine. It functions in the pathway pyrimidine metabolism; dTMP biosynthesis via salvage pathway; dTMP from thymine: step 1/2. Its function is as follows. The enzymes which catalyze the reversible phosphorolysis of pyrimidine nucleosides are involved in the degradation of these compounds and in their utilization as carbon and energy sources, or in the rescue of pyrimidine bases for nucleotide synthesis. The protein is Thymidine phosphorylase of Burkholderia lata (strain ATCC 17760 / DSM 23089 / LMG 22485 / NCIMB 9086 / R18194 / 383).